The chain runs to 484 residues: Protein nucleotidyltransferase YdiU (484 aa).

ATP-binding residues include Gly81, Gly83, Arg84, Lys103, Asp115, Gly116, Arg166, and Arg173. Asp244 acts as the Proton acceptor in catalysis. The Mg(2+) site is built by Asn245 and Asp254. Position 254 (Asp254) interacts with ATP.

This sequence belongs to the SELO family. Mg(2+) serves as cofactor. The cofactor is Mn(2+).

The catalysed reaction is L-seryl-[protein] + ATP = 3-O-(5'-adenylyl)-L-seryl-[protein] + diphosphate. It catalyses the reaction L-threonyl-[protein] + ATP = 3-O-(5'-adenylyl)-L-threonyl-[protein] + diphosphate. The enzyme catalyses L-tyrosyl-[protein] + ATP = O-(5'-adenylyl)-L-tyrosyl-[protein] + diphosphate. It carries out the reaction L-histidyl-[protein] + UTP = N(tele)-(5'-uridylyl)-L-histidyl-[protein] + diphosphate. The catalysed reaction is L-seryl-[protein] + UTP = O-(5'-uridylyl)-L-seryl-[protein] + diphosphate. It catalyses the reaction L-tyrosyl-[protein] + UTP = O-(5'-uridylyl)-L-tyrosyl-[protein] + diphosphate. Its function is as follows. Nucleotidyltransferase involved in the post-translational modification of proteins. It can catalyze the addition of adenosine monophosphate (AMP) or uridine monophosphate (UMP) to a protein, resulting in modifications known as AMPylation and UMPylation. In Shewanella sp. (strain MR-4), this protein is Protein nucleotidyltransferase YdiU.